We begin with the raw amino-acid sequence, 331 residues long: DNA fragmentation factor subunit alpha (331 aa).

Residue Met-1 is modified to N-acetylmethionine. Residues 17–96 enclose the CIDE-N domain; that stretch reads TLKPCLLRRN…ALASNEKWAY (80 aa). Phosphothreonine is present on Thr-243. The interval 305 to 331 is disordered; that stretch reads SLRSISASKASPPGDLQNPKRARQDPT. Ser-315 bears the Phosphoserine mark.

In terms of assembly, heterodimer of DFFA and DFFB. In terms of processing, caspase-3 cleaves DFF45 at 2 sites to generate an active factor.

Its subcellular location is the cytoplasm. Inhibitor of the caspase-activated DNase (DFF40). In Homo sapiens (Human), this protein is DNA fragmentation factor subunit alpha (DFFA).